The sequence spans 593 residues: METPPLPPACTKQGHQKPLDSKDDNTEKHCPVTVNPWHMKKAFKVMNELRSQNLLCDVTIVAEDMEISAHRVVLAACSPYFHAMFTGEMSESRAKRVRIKEVDGWTLRMLIDYVYTAEIQVTEENVQVLLPAAGLLQLQDVKKTCCEFLESQLHPVNCLGIRAFADMHACTDLLNKANTYAEQHFADVVLSEEFLNLGIEQVCSLISSDKLTISSEEKVFEAVIAWVNHDKDVRQEFMARLMEHVRLPLLPREYLVQRVEEEALVKNSSACKDYLIEAMKYHLLPTEQRILMKSVRTRLRTPMNLPKLMVVVGGQAPKAIRSVECYDFKEERWHQVAELPSRRCRAGMVYMAGLVFAVGGFNGSLRVRTVDSYDPVKDQWTSVANMRDRRSTLGAAVLNGLLYAVGGFDGSTGLSSVEAYNIKSNEWFHVAPMNTRRSSVGVGVVGGLLYAVGGYDGASRQCLSTVECYNATTNEWTYIAEMSTRRSGAGVGVLNNLLYAVGGHDGPLVRKSVEVYDPTTNAWRQVADMNMCRRNAGVCAVNGLLYVVGGDDGSCNLASVEYYNPTTDKWTVVSSCMSTGRSYAGVTVIDKPL.

Residues 1-28 (METPPLPPACTKQGHQKPLDSKDDNTEK) are disordered. Residues 17–28 (KPLDSKDDNTEK) are compositionally biased toward basic and acidic residues. Positions 56–123 (CDVTIVAEDM…VYTAEIQVTE (68 aa)) constitute a BTB domain. 6 Kelch repeats span residues 308 to 353 (LMVV…YMAG), 354 to 400 (LVFA…VLNG), 402 to 447 (LYAV…VVGG), 449 to 496 (LYAV…VLNN), 497 to 543 (LLYA…AVNG), and 545 to 591 (LYVV…VIDK).

In terms of assembly, component of the BCR(KLHL2) E3 ubiquitin ligase complex, at least composed of CUL3 and KLHL2 and RBX1. Binds actin. Interacts with KLHL12. Interacts (via N-terminus) with FYN (via SH3 domain). Ubiquitous. Detected throughout the brain.

The protein resides in the cytoplasm. Its subcellular location is the cytoskeleton. It is found in the cell projection. The protein localises to the ruffle. It localises to the lamellipodium. The protein resides in the cytosol. Its pathway is protein modification; protein ubiquitination. Its function is as follows. Substrate-specific adapter of a BCR (BTB-CUL3-RBX1) E3 ubiquitin ligase complex that mediates the ubiquitination of target proteins, such as NPTXR, WNK1, WNK3 and WNK4, leading most often to their proteasomal degradation. The BCR(KLHL2) complex catalyzes ubiquitination and degradation of NPTXR. Responsible for degradative ubiquitination of the WNK kinases WNK1, WNK3 and WNK4. Plays a role in the reorganization of the actin cytoskeleton. Promotes growth of cell projections in oligodendrocyte precursors. This chain is Kelch-like protein 2, found in Homo sapiens (Human).